Consider the following 226-residue polypeptide: Octanoyltransferase (226 aa).

One can recognise a BPL/LPL catalytic domain in the interval 37-220 (GTAGELIWLL…SFSKVFGPVE (184 aa)). Substrate is bound by residues 76–83 (RGGQFTYH), 151–153 (AIG), and 164–166 (GIS). Residue Cys-182 is the Acyl-thioester intermediate of the active site.

The protein belongs to the LipB family.

Its subcellular location is the cytoplasm. It carries out the reaction octanoyl-[ACP] + L-lysyl-[protein] = N(6)-octanoyl-L-lysyl-[protein] + holo-[ACP] + H(+). It functions in the pathway protein modification; protein lipoylation via endogenous pathway; protein N(6)-(lipoyl)lysine from octanoyl-[acyl-carrier-protein]: step 1/2. Catalyzes the transfer of endogenously produced octanoic acid from octanoyl-acyl-carrier-protein onto the lipoyl domains of lipoate-dependent enzymes. Lipoyl-ACP can also act as a substrate although octanoyl-ACP is likely to be the physiological substrate. The protein is Octanoyltransferase of Caulobacter vibrioides (strain ATCC 19089 / CIP 103742 / CB 15) (Caulobacter crescentus).